Reading from the N-terminus, the 91-residue chain is Small ribosomal subunit protein bS20 (91 aa).

The interval 1 to 26 is disordered; the sequence is MANLKSSKKDIRRTARRKERNGEDRT.

It belongs to the bacterial ribosomal protein bS20 family.

Binds directly to 16S ribosomal RNA. In Leptospira biflexa serovar Patoc (strain Patoc 1 / Ames), this protein is Small ribosomal subunit protein bS20.